The following is a 211-amino-acid chain: Protein-L-isoaspartate O-methyltransferase (211 aa).

Serine 60 is a catalytic residue.

The protein belongs to the methyltransferase superfamily. L-isoaspartyl/D-aspartyl protein methyltransferase family.

It is found in the cytoplasm. The catalysed reaction is [protein]-L-isoaspartate + S-adenosyl-L-methionine = [protein]-L-isoaspartate alpha-methyl ester + S-adenosyl-L-homocysteine. Its function is as follows. Catalyzes the methyl esterification of L-isoaspartyl residues in peptides and proteins that result from spontaneous decomposition of normal L-aspartyl and L-asparaginyl residues. It plays a role in the repair and/or degradation of damaged proteins. The chain is Protein-L-isoaspartate O-methyltransferase from Pseudomonas fluorescens (strain ATCC BAA-477 / NRRL B-23932 / Pf-5).